Here is a 924-residue protein sequence, read N- to C-terminus: 104 kDa microneme/rhoptry antigen (924 aa).

A signal peptide spans 1–19; that stretch reads MKFLILLFNILCLFPVLAA. Residues 490 to 907 are disordered; the sequence is SKKKLAPITE…KKPKKPDSAY (418 aa). Basic and acidic residues-rich tracts occupy residues 522–532 and 573–588; these read PGDKEGSEGHK and GPKD…EPRK. Positions 592–617 are enriched in low complexity; that stretch reads PRTASPTRRPSPKLPQLSKLPKSTSP. Over residues 653-673 the composition is skewed to basic and acidic residues; that stretch reads SFKEKFYDDYSKAASRSKETK. Low complexity predominate over residues 724 to 736; that stretch reads SPSTSPSEFFTPP. 3 stretches are compositionally biased toward basic and acidic residues: residues 737–747, 770–783, and 816–825; these read ESKRTRFHETP, KSPD…RSPS, and DPGRMAKDAS. Residues 857 to 867 show a composition bias toward acidic residues; sequence DDEGTEADDEE. Over residues 868–878 the composition is skewed to basic and acidic residues; sequence THPPEERQKTE. The span at 879–901 shows a compositional bias: basic residues; that stretch reads VRRRRPPKKPSKSPRPSKPKKPK. Residue D904 is the site of GPI-anchor amidated aspartate attachment. The propeptide at 905 to 924 is removed in mature form; that stretch reads SAYIPSILAILVVSLIVGIL.

It localises to the cell membrane. The protein is 104 kDa microneme/rhoptry antigen of Theileria parva (East coast fever infection agent).